The sequence spans 121 residues: Flagellar protein FliT (121 aa).

Positions 1–50 are required for homodimerization; sequence MNHAPHLYFAWQQLVEKSQLMLRLATEEQWDELIASEMAYVNAVQEIAHL. Positions 60-98 are fliD binding; that stretch reads MQEQLRPMLRLILDNESKVKQLLQIRMDELAKLVGQSSV.

The protein belongs to the FliT family. In terms of assembly, homodimer. Interacts with FliD and FlhC.

The protein localises to the cytoplasm. It is found in the cytosol. In terms of biological role, dual-function protein that regulates the transcription of class 2 flagellar operons and that also acts as an export chaperone for the filament-capping protein FliD. As a transcriptional regulator, acts as an anti-FlhDC factor; it directly binds FlhC, thus inhibiting the binding of the FlhC/FlhD complex to class 2 promoters, resulting in decreased expression of class 2 flagellar operons. As a chaperone, effects FliD transition to the membrane by preventing its premature polymerization, and by directing it to the export apparatus. The polypeptide is Flagellar protein FliT (Escherichia coli (strain ATCC 8739 / DSM 1576 / NBRC 3972 / NCIMB 8545 / WDCM 00012 / Crooks)).